Reading from the N-terminus, the 241-residue chain is ATP synthase subunit a (241 aa).

A run of 5 helical transmembrane segments spans residues 30–50, 91–111, 128–148, 193–213, and 214–234; these read GQVF…ISVG, FIGT…LIPW, INTT…AGLS, LVVG…VMFL, and GLFT…YYIG.

The protein belongs to the ATPase A chain family. In terms of assembly, F-type ATPases have 2 components, CF(1) - the catalytic core - and CF(0) - the membrane proton channel. CF(1) has five subunits: alpha(3), beta(3), gamma(1), delta(1), epsilon(1). CF(0) has four main subunits: a, b, b' and c.

It is found in the cellular thylakoid membrane. Its function is as follows. Key component of the proton channel; it plays a direct role in the translocation of protons across the membrane. The chain is ATP synthase subunit a from Prochlorococcus marinus subsp. pastoris (strain CCMP1986 / NIES-2087 / MED4).